Consider the following 413-residue polypeptide: Metacaspase-1A (413 aa).

The segment at 1–104 (MQNHHHQQSS…PTDPVAFGHG (104 aa)) is disordered. Pro residues predominate over residues 36–47 (SPQPGYGAPPPH). Residues 49–58 (GYGQPPSGYG) show a composition bias toward low complexity. The span at 75–85 (GMNQYQNTYSH) shows a compositional bias: polar residues. Residues H204 and C260 contribute to the active site.

Belongs to the peptidase C14B family.

In terms of biological role, involved in cell death (apoptosis). Required for the apoptotic-like loss of membrane phospholipid asymmetry at stationary phase and facilitates growth under conditions of endoplasmic reticulum stress. In Aspergillus fumigatus (strain CBS 144.89 / FGSC A1163 / CEA10) (Neosartorya fumigata), this protein is Metacaspase-1A (casA).